Here is an 857-residue protein sequence, read N- to C-terminus: Glucans biosynthesis glucosyltransferase H (857 aa).

6 consecutive transmembrane segments (helical) span residues 142–162 (ILLA…KGIL), 196–216 (ILIL…TALM), 515–535 (VFLT…FLVL), 572–592 (LFST…ILIW), 606–626 (TLSM…RMIF), and 682–702 (FLWW…VSVI).

This sequence belongs to the glycosyltransferase 2 family. OpgH subfamily.

The protein resides in the cell inner membrane. Its pathway is glycan metabolism; osmoregulated periplasmic glucan (OPG) biosynthesis. Functionally, involved in the biosynthesis of osmoregulated periplasmic glucans (OPGs). The chain is Glucans biosynthesis glucosyltransferase H from Pseudomonas putida (strain ATCC 700007 / DSM 6899 / JCM 31910 / BCRC 17059 / LMG 24140 / F1).